A 90-amino-acid polypeptide reads, in one-letter code: Small cell adhesion glycoprotein homolog (90 aa).

Residues 1–27 (MSILPTTDSVPEEAITKASGDVDGFEK) lie on the Extracellular side of the membrane. Residues 28–48 (AVVGGVIAAVFITLITVVVLI) form a helical; Signal-anchor for type III membrane protein membrane-spanning segment. Over 49–90 (TVYLYKHKGSYRTNENLEDVEASKTLQMEDSALTPEKKEYFM) the chain is Cytoplasmic.

Belongs to the SMAGP family.

The protein resides in the cell membrane. It is found in the cytoplasmic vesicle membrane. Functionally, may play a role in epithelial cell-cell contacts. The sequence is that of Small cell adhesion glycoprotein homolog (smagp) from Xenopus tropicalis (Western clawed frog).